The sequence spans 493 residues: Cysteine--tRNA ligase (493 aa).

Cys29 serves as a coordination point for Zn(2+). Positions 31–41 match the 'HIGH' region motif; it reads VTVYDYCHIGH. Positions 209, 234, and 238 each coordinate Zn(2+). Residues 266–270 carry the 'KMSKS' region motif; the sequence is KMSKS. Lys269 lines the ATP pocket.

It belongs to the class-I aminoacyl-tRNA synthetase family. Monomer. Zn(2+) is required as a cofactor.

The protein resides in the cytoplasm. The catalysed reaction is tRNA(Cys) + L-cysteine + ATP = L-cysteinyl-tRNA(Cys) + AMP + diphosphate. In Pelobacter propionicus (strain DSM 2379 / NBRC 103807 / OttBd1), this protein is Cysteine--tRNA ligase.